Consider the following 498-residue polypeptide: Tyrosine 3-monooxygenase (498 aa).

Positions 1–10 are enriched in polar residues; it reads MPTPSASSPQ. Positions 1–33 are disordered; that stretch reads MPTPSASSPQPKGFRRAVSEQDTKQAEAVTSPR. A phosphoserine mark is found at Ser-19 and Ser-31. Ser-40 carries the phosphoserine; by CaMK2 and PKA modification. Fe cation-binding residues include His-331, His-336, and Glu-376. Ser-472 carries the post-translational modification Phosphoserine.

Belongs to the biopterin-dependent aromatic amino acid hydroxylase family. Homotetramer. Interacts (when phosphorylated at Ser-19) with YWHAG; one YWHAG dimer bounds to one TH tetramer and this interaction may influence the phosphorylation and dephosphorylation of other sites. Interacts with NT5DC2; the interaction results in reduced phosphorylation and decreased catalytic activity of TH. Requires Fe(2+) as cofactor. In terms of processing, phosphorylated on Ser-19, Ser-31 and Ser-40 by several protein kinases with different site specificities. Phosphorylation at Ser-31 and Ser-40 leads to an increase of TH activity. Phosphorylation at Ser-40 activates the enzyme and also counteracts the feedback inhibition of TH by catecholamines. Phosphorylation of Ser-19 and Ser-31 triggers the proteasomal degradation of TH through the ubiquitin-proteasome pathway. Phosphorylation at Ser-31 facilitates transport of TH from the soma to the nerve terminals via the microtubule network. Phosphorylation at Ser-19 induces the high-affinity binding to the 14-3-3 protein YWHAG; this interaction may influence the phosphorylation and dephosphorylation of other sites. Ser-19 increases the phosphorylation at Ser-40 in a hierarchical manner, leading to increased activity. As to expression, expressed in the adrenal gland. Expressed in the retina. Expressed in the in the striatum (at protein level).

It is found in the cytoplasm. It localises to the perinuclear region. The protein localises to the nucleus. Its subcellular location is the cell projection. The protein resides in the axon. It is found in the cytoplasmic vesicle. It localises to the secretory vesicle. The protein localises to the synaptic vesicle. It carries out the reaction (6R)-L-erythro-5,6,7,8-tetrahydrobiopterin + L-tyrosine + O2 = (4aS,6R)-4a-hydroxy-L-erythro-5,6,7,8-tetrahydrobiopterin + L-dopa. It participates in catecholamine biosynthesis; dopamine biosynthesis; dopamine from L-tyrosine: step 1/2. With respect to regulation, inhibited in feedback fashion by the catecholamine neurotransmitters, especially by dopamine in competition with tetrahydrobiopterin. Phosphorylation of several Ser/Thr residues in the N-terminus regulates the catalytic activity. Ser-31 and Ser-40 are readily phosphorylated to activate the catalytic activity. A Cysteine modification induced by N-ethylmaleimide (NEM), inhibits tyrosine 3-monooxygenase activity through the modification of the Cys-177. Catalyzes the conversion of L-tyrosine to L-dihydroxyphenylalanine (L-Dopa), the rate-limiting step in the biosynthesis of catecholamines, dopamine, noradrenaline, and adrenaline. Uses tetrahydrobiopterin and molecular oxygen to convert tyrosine to L-Dopa. In addition to tyrosine, is able to catalyze the hydroxylation of phenylalanine and tryptophan with lower specificity. Positively regulates the regression of retinal hyaloid vessels during postnatal development. In Mus musculus (Mouse), this protein is Tyrosine 3-monooxygenase (Th).